The primary structure comprises 151 residues: 16.9 kDa class I heat shock protein 1 (151 aa).

One can recognise a sHSP domain in the interval 37 to 151 (ETAAFANARV…PEVKAIEISG (115 aa)).

This sequence belongs to the small heat shock protein (HSP20) family. May form oligomeric structures.

The protein localises to the cytoplasm. The protein is 16.9 kDa class I heat shock protein 1 (hsp16.9A) of Triticum aestivum (Wheat).